We begin with the raw amino-acid sequence, 195 residues long: Nicotinamide riboside kinase 1 (195 aa).

ATP is bound at residue 10–18 (GVTNGGKTT). 2 residues coordinate Mg(2+): Thr17 and Asp36. Catalysis depends on Asp36, which acts as the Proton acceptor. Residues 36-39 (DDFF) and 55-56 (YD) each bind substrate. Position 128 (Arg128) interacts with ATP. Substrate is bound by residues Arg129 and 134-135 (YE). ATP is bound by residues 132 to 134 (RVY) and 172 to 174 (RSE).

The protein belongs to the uridine kinase family. NRK subfamily. In terms of assembly, monomer.

The catalysed reaction is beta-nicotinamide D-riboside + ATP = beta-nicotinamide D-ribonucleotide + ADP + H(+). It catalyses the reaction beta-D-ribosylnicotinate + ATP = nicotinate beta-D-ribonucleotide + ADP + H(+). It functions in the pathway cofactor biosynthesis; NAD(+) biosynthesis. In terms of biological role, catalyzes the phosphorylation of nicotinamide riboside (NR) and nicotinic acid riboside (NaR) to form nicotinamide mononucleotide (NMN) and nicotinic acid mononucleotide (NaMN). This is Nicotinamide riboside kinase 1 (Nmrk1) from Mus musculus (Mouse).